A 761-amino-acid polypeptide reads, in one-letter code: MSLWKRISSHVDCEQRMAAYYEEKGMLELRLCLAPWIEDRIMSEQITPNTTDQLERVALKFNEDLQQKLLSTRTASDQALKFRVVELCALIQRISAVELYTHLRSGLQKELQLVTEKSVAATAGQSMPLNPYNMNNTPMVTGYMVDPSDLLAVSNSCNPPVVQGIGPIHNVQNTGIASPALGMVTPKVELYEVQHQIMQSLNEFGNCANALKLLAQNYSYMLNSTSSPNAEAAYRSLIDEKAAIVLTMRRSFMYYESLHEMVIHELKNWRHQQAQAGNGAPFNEGSLDDIQRCFEMLESFIAHMLAAVKELMRVRLVTEEPELTHLLEQVQNAQKNLVCSAFIVDKQPPQVMKTNTRFAASVRWLIGSQLGIHNNPPTVECIIMSEIQSQRFVTRNTQMDNSSLSGQSSGEIQNASSTMEYQQNNHVFSASFRNMQLKKIKRAEKKGTESVMDEKFALFFYTTTTVNDFQIRVWTLSLPVVVIVHGNQEPQSWATITWDNAFAEIVRDPFMITDRVTWAQLSVALNIKFGSCTGRSLTIDNLDFLYEKLQREERSEYITWNQFCKEPMPDRSFTFWEWFFAIMKLTKDHMLGMWKAGCIMGFINKTKAQTDLLRSVYGIGTFLLRFSDSELGGVTIAYVNENGLVTMLAPWTARDFQVLNLADRIRDLDVLCWLHPSDRNASPVKRDVAFGEFYSKRQEPEPLVLDPVTGYVKSTLHVHVCRNGENGSTSGTPHHAQESMQLGNGDFGMADFDTITNFENF.

Residues 594-658 (WKAGCIMGFI…APWTARDFQV (65 aa)) enclose the SH2 domain. A Phosphotyrosine; by JAK modification is found at tyrosine 711.

Belongs to the transcription factor STAT family. In terms of assembly, forms a homodimer or a heterodimer with a related family member. Tyrosine phosphorylated by hopscotch. Phosphorylation is required for DNA-binding activity and dimerization.

Its subcellular location is the cytoplasm. The protein resides in the nucleus. Might play a role in signal transduction and activation of transcription. Plays an important role in the segmental pattern formation in the early embryo by activating specific stripes of pair rule gene expression in early development as part of the Janus kinase-STAT pathway. Might play a role in male germline stem cell maintenance. In Drosophila melanogaster (Fruit fly), this protein is Signal transducer and transcription activator (Stat92E).